The following is a 364-amino-acid chain: Peptide chain release factor 1 (364 aa).

At Q237 the chain carries N5-methylglutamine.

Belongs to the prokaryotic/mitochondrial release factor family. In terms of processing, methylated by PrmC. Methylation increases the termination efficiency of RF1.

Its subcellular location is the cytoplasm. Functionally, peptide chain release factor 1 directs the termination of translation in response to the peptide chain termination codons UAG and UAA. This is Peptide chain release factor 1 from Rubrobacter xylanophilus (strain DSM 9941 / JCM 11954 / NBRC 16129 / PRD-1).